The chain runs to 189 residues: Small ribosomal subunit protein uS7 (189 aa).

Belongs to the universal ribosomal protein uS7 family. In terms of assembly, part of the 30S ribosomal subunit.

Its function is as follows. One of the primary rRNA binding proteins, it binds directly to 16S rRNA where it nucleates assembly of the head domain of the 30S subunit. Is located at the subunit interface close to the decoding center. The sequence is that of Small ribosomal subunit protein uS7 from Methanosarcina acetivorans (strain ATCC 35395 / DSM 2834 / JCM 12185 / C2A).